Here is a 265-residue protein sequence, read N- to C-terminus: MNVNKFKSMKGKKPIVMLTAYDSVFASIVHQAGVDAILVGDSLANNVLGYSDTLPATMEDMIRHTQAVRRGAPEAFIIADMPFLSYQCSSDEAVRNAGRFLKEAGANAVKLEGGSFFSTTIERIVKSGIPVMGHLGLTPQSVNVFGGYKVQGKGDKSAKYLLEEAKALEEAGVFSIVLEMVVEETAKMITENLSIPTIGIGSGRFCDGQILVINDLLGMNPSFLPKFAKRYSNLFQISLEAVKNYVSDVQNHRFPFEENVFKAGE.

2 residues coordinate Mg(2+): D41 and D80. 3-methyl-2-oxobutanoate contacts are provided by residues D41–S42, D80, and K110. E112 serves as a coordination point for Mg(2+). E179 functions as the Proton acceptor in the catalytic mechanism.

Belongs to the PanB family. As to quaternary structure, homodecamer; pentamer of dimers. The cofactor is Mg(2+).

It localises to the cytoplasm. It carries out the reaction 3-methyl-2-oxobutanoate + (6R)-5,10-methylene-5,6,7,8-tetrahydrofolate + H2O = 2-dehydropantoate + (6S)-5,6,7,8-tetrahydrofolate. It participates in cofactor biosynthesis; (R)-pantothenate biosynthesis; (R)-pantoate from 3-methyl-2-oxobutanoate: step 1/2. Its function is as follows. Catalyzes the reversible reaction in which hydroxymethyl group from 5,10-methylenetetrahydrofolate is transferred onto alpha-ketoisovalerate to form ketopantoate. The chain is 3-methyl-2-oxobutanoate hydroxymethyltransferase from Pseudothermotoga lettingae (strain ATCC BAA-301 / DSM 14385 / NBRC 107922 / TMO) (Thermotoga lettingae).